The following is a 135-amino-acid chain: Cytochrome c-type biogenesis protein CcmE (135 aa).

Over 1–8 (MLLLRWKR) the chain is Cytoplasmic. The chain crosses the membrane as a helical; Signal-anchor for type II membrane protein span at residues 9-29 (FWFLSLGILLFSGVVSLMLFN). Residues 30–135 (LSESISFFYL…EDFIKSVRGE (106 aa)) lie on the Periplasmic side of the membrane. 2 residues coordinate heme: histidine 118 and tyrosine 122.

The protein belongs to the CcmE/CycJ family.

The protein localises to the cell inner membrane. Functionally, heme chaperone required for the biogenesis of c-type cytochromes. Transiently binds heme delivered by CcmC and transfers the heme to apo-cytochromes in a process facilitated by CcmF and CcmH. In Neorickettsia sennetsu (strain ATCC VR-367 / Miyayama) (Ehrlichia sennetsu), this protein is Cytochrome c-type biogenesis protein CcmE.